Here is a 162-residue protein sequence, read N- to C-terminus: NADH-quinone oxidoreductase subunit I 2 (162 aa).

2 4Fe-4S ferredoxin-type domains span residues 53-83 (LRRYPNGEERCIACKLCEAVCPALAITIESE) and 93-122 (TRYDIDLTKCIFCGFCEESCPVDSIVETRI). Cys-63, Cys-66, Cys-69, Cys-73, Cys-102, Cys-105, Cys-108, and Cys-112 together coordinate [4Fe-4S] cluster.

This sequence belongs to the complex I 23 kDa subunit family. NDH-1 is composed of 14 different subunits. Subunits NuoA, H, J, K, L, M, N constitute the membrane sector of the complex. Requires [4Fe-4S] cluster as cofactor.

It localises to the cell inner membrane. The catalysed reaction is a quinone + NADH + 5 H(+)(in) = a quinol + NAD(+) + 4 H(+)(out). Its function is as follows. NDH-1 shuttles electrons from NADH, via FMN and iron-sulfur (Fe-S) centers, to quinones in the respiratory chain. The immediate electron acceptor for the enzyme in this species is believed to be ubiquinone. Couples the redox reaction to proton translocation (for every two electrons transferred, four hydrogen ions are translocated across the cytoplasmic membrane), and thus conserves the redox energy in a proton gradient. The protein is NADH-quinone oxidoreductase subunit I 2 of Nitrosospira multiformis (strain ATCC 25196 / NCIMB 11849 / C 71).